The sequence spans 307 residues: Aspartate carbamoyltransferase catalytic subunit (307 aa).

Carbamoyl phosphate is bound by residues Arg54 and Thr55. Lys83 lines the L-aspartate pocket. Residues Arg104, His132, and Gln135 each coordinate carbamoyl phosphate. Residues Arg165 and Arg228 each coordinate L-aspartate. Carbamoyl phosphate-binding residues include Leu267 and Pro268.

The protein belongs to the aspartate/ornithine carbamoyltransferase superfamily. ATCase family. Heterododecamer (2C3:3R2) of six catalytic PyrB chains organized as two trimers (C3), and six regulatory PyrI chains organized as three dimers (R2).

The enzyme catalyses carbamoyl phosphate + L-aspartate = N-carbamoyl-L-aspartate + phosphate + H(+). It participates in pyrimidine metabolism; UMP biosynthesis via de novo pathway; (S)-dihydroorotate from bicarbonate: step 2/3. Functionally, catalyzes the condensation of carbamoyl phosphate and aspartate to form carbamoyl aspartate and inorganic phosphate, the committed step in the de novo pyrimidine nucleotide biosynthesis pathway. The polypeptide is Aspartate carbamoyltransferase catalytic subunit (Clostridium botulinum (strain Loch Maree / Type A3)).